A 375-amino-acid polypeptide reads, in one-letter code: MHFPLVSAWNKRRRSKSYDTDPCTFLFSIIFARWHKRVYRTAECWQIEDQASQPRKRRFGSSVYTLKEMEEATSSFSDENLLGKGGFGRVYQGTLKTGEVVAIKKMDLPTFKKADGEREFRVEVDILSRLDHPNLVSLIGYCADGKHRFLVYEYMQNGNLQDHLNGIKEAKISWPIRLRIALGAAKGLAYLHSSSSVGIPIVHRDFKSTNVLLDSNYNAKISDFGLAKLMPEGKDTCVTARVLGTFGYFDPEYTSTGKLTLQSDIYAFGVVLLELLTGRRAVDLTQGPNEQNLVLQVRNILNDRKKLRKVIDVELPRNSYSMEAITMFADLASRCIRIESKERPSVMDCVKELQLIIYTNSKGGLGGTIPTFRRL.

Thr65 is subject to Phosphothreonine. Positions 76-356 (FSDENLLGKG…MDCVKELQLI (281 aa)) constitute a Protein kinase domain. Residues 82–90 (LGKGGFGRV) and Lys104 each bind ATP. Tyr152 is subject to Phosphotyrosine. Asp205 (proton acceptor) is an active-site residue. Phosphothreonine is present on Thr245. Phosphotyrosine is present on Tyr253.

It belongs to the protein kinase superfamily. Ser/Thr protein kinase family.

The protein resides in the cell membrane. The enzyme catalyses L-seryl-[protein] + ATP = O-phospho-L-seryl-[protein] + ADP + H(+). It carries out the reaction L-threonyl-[protein] + ATP = O-phospho-L-threonyl-[protein] + ADP + H(+). May be involved in plant defense signaling. The protein is Probable serine/threonine-protein kinase PBL28 of Arabidopsis thaliana (Mouse-ear cress).